The sequence spans 316 residues: Probable cell division protein WhiA (316 aa).

A DNA-binding region (H-T-H motif) is located at residues 275-309 (TLKELGEMVSGGKISKSGINHRLRKIDEIAEKLRA).

This sequence belongs to the WhiA family.

Its function is as follows. Involved in cell division and chromosome segregation. In Bacillus cereus (strain G9842), this protein is Probable cell division protein WhiA.